The primary structure comprises 61 residues: Small ribosomal subunit protein uS14 (61 aa).

4 residues coordinate Zn(2+): Cys-24, Cys-27, Cys-40, and Cys-43.

It belongs to the universal ribosomal protein uS14 family. Zinc-binding uS14 subfamily. As to quaternary structure, part of the 30S ribosomal subunit. Contacts proteins S3 and S10. It depends on Zn(2+) as a cofactor.

Binds 16S rRNA, required for the assembly of 30S particles and may also be responsible for determining the conformation of the 16S rRNA at the A site. This chain is Small ribosomal subunit protein uS14, found in Fervidobacterium nodosum (strain ATCC 35602 / DSM 5306 / Rt17-B1).